Consider the following 662-residue polypeptide: 3',5'-cyclic-AMP phosphodiesterase, isoform F (662 aa).

2 disordered regions span residues 79 to 108 and 207 to 245; these read VPAS…LSQG and SAGQ…RLPT. The segment covering 80–98 has biased composition (polar residues); the sequence is PASNKSRRPNQSSSASRSG. Residues 248–577 form the PDEase domain; sequence VETPRENELG…DYYQSMIPPS (330 aa). The active-site Proton donor is the histidine 324. 324–328 is a 3',5'-cyclic AMP binding site; it reads HNSLH. 4 residues coordinate a divalent metal cation: histidine 328, histidine 364, aspartate 365, and aspartate 482. 3',5'-cyclic AMP-binding residues include aspartate 365, aspartate 482, and glutamine 533. Acidic residues predominate over residues 599-616; it reads EESDQENLAELEEGDESG. The disordered stretch occupies residues 599–662; the sequence is EESDQENLAE…CQNQPQHGGM (64 aa). Positions 617 to 634 are enriched in low complexity; it reads GESTTTGTTGTTAASALS. Positions 635–646 are enriched in gly residues; that stretch reads GAGGGGGGGGGM. Polar residues predominate over residues 652–662; the sequence is GCQNQPQHGGM.

This sequence belongs to the cyclic nucleotide phosphodiesterase family. PDE4 subfamily. In terms of assembly, monomer. A divalent metal cation is required as a cofactor.

The enzyme catalyses 3',5'-cyclic AMP + H2O = AMP + H(+). The protein operates within purine metabolism; 3',5'-cyclic AMP degradation; AMP from 3',5'-cyclic AMP: step 1/1. Hydrolyzes the second messenger cAMP, which is a key regulator of many important physiological processes. Vital for female fertility. Required for learning/memory. The sequence is that of 3',5'-cyclic-AMP phosphodiesterase, isoform F from Drosophila melanogaster (Fruit fly).